Here is a 300-residue protein sequence, read N- to C-terminus: Epimerase family protein MW0731 (300 aa).

The protein belongs to the NAD(P)-dependent epimerase/dehydratase family. SDR39U1 subfamily.

The sequence is that of Epimerase family protein MW0731 from Staphylococcus aureus (strain MW2).